Here is a 460-residue protein sequence, read N- to C-terminus: Argininosuccinate lyase (460 aa).

It belongs to the lyase 1 family. Argininosuccinate lyase subfamily.

The protein resides in the cytoplasm. The catalysed reaction is 2-(N(omega)-L-arginino)succinate = fumarate + L-arginine. Its pathway is amino-acid biosynthesis; L-arginine biosynthesis; L-arginine from L-ornithine and carbamoyl phosphate: step 3/3. This Leuconostoc mesenteroides subsp. mesenteroides (strain ATCC 8293 / DSM 20343 / BCRC 11652 / CCM 1803 / JCM 6124 / NCDO 523 / NBRC 100496 / NCIMB 8023 / NCTC 12954 / NRRL B-1118 / 37Y) protein is Argininosuccinate lyase.